Here is a 418-residue protein sequence, read N- to C-terminus: Flavin-dependent L-tryptophan oxidase VioA (418 aa).

G13 is a binding site for Mg(2+). S15 serves as a coordination point for FAD. G16 serves as a coordination point for Mg(2+). Positions 38, 46, and 64 each coordinate FAD. Substrate contacts are provided by R64 and H163. L208 is a binding site for FAD. Mg(2+) is bound at residue A240. Substrate is bound at residue Y309. M398 contacts FAD.

The protein belongs to the flavin monoamine oxidase family. Homodimer. Requires FAD as cofactor. The cofactor is Mg(2+).

The catalysed reaction is L-tryptophan + O2 = 2-iminio-3-(indol-3-yl)propanoate + H2O2. The enzyme catalyses 7-chloro-L-tryptophan + O2 = 3-(7-chloroindol-3-yl)-2-iminopropanoate + H2O2. The protein operates within pigment biosynthesis; violacein biosynthesis. Its function is as follows. The enzyme generates the imine form of indole 3-pyruvate (IPA) from L-tryptophan (L-Trp), with concomitant two-electron reduction of O(2) to H(2)O(2). The protein is Flavin-dependent L-tryptophan oxidase VioA (vioA) of Chromobacterium violaceum (strain ATCC 12472 / DSM 30191 / JCM 1249 / CCUG 213 / NBRC 12614 / NCIMB 9131 / NCTC 9757 / MK).